Consider the following 320-residue polypeptide: Protein U25 (320 aa).

It belongs to the herpesviridae US22 family.

This Human herpesvirus 7 (strain JI) (HHV-7) protein is Protein U25 (U25).